A 191-amino-acid polypeptide reads, in one-letter code: Molybdenum cofactor guanylyltransferase (191 aa).

Residues 11 to 13 (LCG), lysine 23, aspartate 66, and aspartate 97 each bind GTP. Aspartate 97 is a binding site for Mg(2+).

The protein belongs to the MobA family. As to quaternary structure, monomer. Mg(2+) serves as cofactor.

It localises to the cytoplasm. It catalyses the reaction Mo-molybdopterin + GTP + H(+) = Mo-molybdopterin guanine dinucleotide + diphosphate. Transfers a GMP moiety from GTP to Mo-molybdopterin (Mo-MPT) cofactor (Moco or molybdenum cofactor) to form Mo-molybdopterin guanine dinucleotide (Mo-MGD) cofactor. The sequence is that of Molybdenum cofactor guanylyltransferase from Campylobacter jejuni subsp. doylei (strain ATCC BAA-1458 / RM4099 / 269.97).